The chain runs to 428 residues: Histidinol dehydrogenase (428 aa).

The NAD(+) site is built by Tyr-129, Gln-188, and Asn-211. Substrate is bound by residues Ser-234, Gln-256, and His-259. Zn(2+) contacts are provided by Gln-256 and His-259. Active-site proton acceptor residues include Glu-323 and His-324. The substrate site is built by His-324, Asp-357, Glu-411, and His-416. Residue Asp-357 participates in Zn(2+) binding. His-416 contributes to the Zn(2+) binding site.

This sequence belongs to the histidinol dehydrogenase family. It depends on Zn(2+) as a cofactor.

The catalysed reaction is L-histidinol + 2 NAD(+) + H2O = L-histidine + 2 NADH + 3 H(+). It functions in the pathway amino-acid biosynthesis; L-histidine biosynthesis; L-histidine from 5-phospho-alpha-D-ribose 1-diphosphate: step 9/9. In terms of biological role, catalyzes the sequential NAD-dependent oxidations of L-histidinol to L-histidinaldehyde and then to L-histidine. This is Histidinol dehydrogenase from Caulobacter vibrioides (strain ATCC 19089 / CIP 103742 / CB 15) (Caulobacter crescentus).